A 195-amino-acid chain; its full sequence is MTEVVAREVYYCGVCSFPPEYCEFGVSLKRCKDWLQDNNQELFDKIYSDDALATQTSTLSIERQEKISQELAKKQLKEEAKQERELQKKLASKVLIKRIERNRRKHIISISGLEVFNIDMKKLAKTFASKFATGASVTKTADKKEEILVQGDVSDEAKEYIEKLLEEQGLNGVEVEQVDEKKKKKATAPGATPAA.

The SUI1 domain maps to 94 to 165 (VLIKRIERNR…EAKEYIEKLL (72 aa)). The interval 176–195 (EQVDEKKKKKATAPGATPAA) is disordered.

The protein belongs to the DENR family. As to quaternary structure, interacts with the 40S ribosomal subunit.

The protein localises to the cytoplasm. The polypeptide is Translation machinery-associated protein 22 (TMA22) (Scheffersomyces stipitis (strain ATCC 58785 / CBS 6054 / NBRC 10063 / NRRL Y-11545) (Yeast)).